We begin with the raw amino-acid sequence, 271 residues long: Sedoheptulose 1,7-bisphosphatase (271 aa).

Arg-12 serves as a coordination point for substrate. Residue His-13 is the Tele-phosphohistidine intermediate of the active site. Substrate-binding positions include 24-25, Arg-69, 99-102, Arg-181, and His-244; these read YT and EWEY. Residue Glu-99 is the Proton donor/acceptor of the active site.

The protein belongs to the phosphoglycerate mutase family. SHB17 subfamily. As to quaternary structure, homodimer.

The protein localises to the cytoplasm. It localises to the nucleus. It carries out the reaction D-sedoheptulose 1,7-bisphosphate + H2O = D-sedoheptulose 7-phosphate + phosphate. Functionally, sedoheptulose 1,7-bisphosphatase involved in riboneogenesis. Dephosphorylates sedoheptulose 1,7-bisphosphate (SBP), which is converted via the non-oxidative pentose phosphate pathway to ribose-5-phosphate. Has a fructose 1,6-bisphosphatase activity in vitro, but this is probably not biologically relevant, since deletion does not affect fructose 1,6-biphosphate (FBP) levels. The polypeptide is Sedoheptulose 1,7-bisphosphatase (SHB17) (Saccharomyces cerevisiae (strain ATCC 204508 / S288c) (Baker's yeast)).